The following is a 535-amino-acid chain: Putative beta-glucosidase 41 (535 aa).

The first 27 residues, 1–27 (MESLMRLVLVLFPFFVVFFVPLDHVSS), serve as a signal peptide directing secretion. Gln49 lines the a beta-D-glucoside pocket. N-linked (GlcNAc...) asparagine glycosylation occurs at Asn118. A beta-D-glucoside-binding positions include His151 and 196-197 (NE). Glu197 serves as the catalytic Proton donor. A disulfide bond links Cys216 and Cys224. A beta-D-glucoside is bound by residues Tyr340 and Glu413. The Nucleophile role is filled by Glu413. Asn445 carries an N-linked (GlcNAc...) asparagine glycan. Residues Trp463, 470–471 (EW), and Phe479 contribute to the a beta-D-glucoside site. Asn489 is a glycosylation site (N-linked (GlcNAc...) asparagine).

The protein belongs to the glycosyl hydrolase 1 family.

The catalysed reaction is Hydrolysis of terminal, non-reducing beta-D-glucosyl residues with release of beta-D-glucose.. In Arabidopsis thaliana (Mouse-ear cress), this protein is Putative beta-glucosidase 41.